We begin with the raw amino-acid sequence, 249 residues long: tRNA pseudouridine synthase A (249 aa).

Residue Asp53 is the Nucleophile of the active site. Tyr111 provides a ligand contact to substrate.

This sequence belongs to the tRNA pseudouridine synthase TruA family. Homodimer.

The enzyme catalyses uridine(38/39/40) in tRNA = pseudouridine(38/39/40) in tRNA. Formation of pseudouridine at positions 38, 39 and 40 in the anticodon stem and loop of transfer RNAs. The sequence is that of tRNA pseudouridine synthase A from Streptococcus pneumoniae (strain P1031).